We begin with the raw amino-acid sequence, 125 residues long: MAISKEEVLEYIGSLSVLELSELVKMFEEKFGVSATPTVVAGAAVAGGAVAESEEKTDFNVILADSGAEKIKVIKVVREITGLGLKEAKDATEKTPHVLKEGVNKEEAETIKKKLEEVGAKVEIK.

It belongs to the bacterial ribosomal protein bL12 family. As to quaternary structure, homodimer. Part of the ribosomal stalk of the 50S ribosomal subunit. Forms a multimeric L10(L12)X complex, where L10 forms an elongated spine to which 2 to 4 L12 dimers bind in a sequential fashion. Binds GTP-bound translation factors.

Functionally, forms part of the ribosomal stalk which helps the ribosome interact with GTP-bound translation factors. Is thus essential for accurate translation. In Helicobacter acinonychis (strain Sheeba), this protein is Large ribosomal subunit protein bL12.